The following is a 97-amino-acid chain: MANIKSALKRIEIAERNRLQNKSYKSAIKTLMKKTFQSVEAYASDPNPEKLDTINTSMAAAFSKIDKAVKCKVIHKNNAARKKARLAKALQSALPAA.

This sequence belongs to the bacterial ribosomal protein bS20 family.

Functionally, binds directly to 16S ribosomal RNA. The sequence is that of Small ribosomal subunit protein bS20 from Synechocystis sp. (strain ATCC 27184 / PCC 6803 / Kazusa).